We begin with the raw amino-acid sequence, 1225 residues long: uncharacterized protein (1225 aa).

Residues 1-15 (MSSQAEPSKGASNAD) are compositionally biased toward polar residues. Residues 1 to 104 (MSSQAEPSKG…VDGVPTRPVS (104 aa)) are disordered. Over residues 16–25 (PNEKVEKMHL) the composition is skewed to basic and acidic residues. Residues 43–65 (ASPSDKNNLNPQSAGVSEVQVQD) show a composition bias toward polar residues. Residues 167–187 (FLFGYLRFGFLSLFIIMAVCI) form a helical membrane-spanning segment. Residues 217 to 422 (DSETVTWLNT…SPNVYELDIE (206 aa)) enclose the SMP-LTD domain. 3 C2 domains span residues 413-534 (SPNV…NDAF), 559-668 (DSGE…LLWF), and 685-803 (KPAQ…GALM). Residue Ser843 is modified to Phosphoserine. The interval 867–890 (PESQKTPTAVDNTSTSRGSTSVKT) is disordered. Residues 869-890 (SQKTPTAVDNTSTSRGSTSVKT) are compositionally biased toward polar residues. The C2 4 domain maps to 1019-1137 (RLTPVPVKLE…QQQQQTNYEI (119 aa)). Residues Asp1053, Asp1059, Asp1107, Asp1109, and Asp1115 each contribute to the Ca(2+) site.

The cofactor is Ca(2+).

It localises to the endoplasmic reticulum membrane. This is an uncharacterized protein from Schizosaccharomyces pombe (strain 972 / ATCC 24843) (Fission yeast).